The following is a 734-amino-acid chain: Homoaconitase, mitochondrial (734 aa).

The N-terminal 25 residues, 1 to 25, are a transit peptide targeting the mitochondrion; the sequence is MGASNLLRFGAVTRISTPLLSRRSL. The [4Fe-4S] cluster site is built by C367, C427, and C430.

This sequence belongs to the aconitase/IPM isomerase family. [4Fe-4S] cluster is required as a cofactor.

Its subcellular location is the mitochondrion. The catalysed reaction is (2R,3S)-homoisocitrate = cis-homoaconitate + H2O. It participates in amino-acid biosynthesis; L-lysine biosynthesis via AAA pathway; L-alpha-aminoadipate from 2-oxoglutarate: step 3/5. Catalyzes the reversible hydration of cis-homoaconitate to (2R,3S)-homoisocitrate, a step in the alpha-aminoadipate pathway for lysine biosynthesis. The polypeptide is Homoaconitase, mitochondrial (LYS4) (Mycosarcoma maydis (Corn smut fungus)).